Here is a 950-residue protein sequence, read N- to C-terminus: Translation initiation factor IF-2 (950 aa).

Composition is skewed to basic and acidic residues over residues 128–158 (KPKV…EAKA), 165–186 (AEVK…EKKK), 200–234 (KRAE…DNRR), and 291–312 (NRRD…DGNR). Residues 128 to 354 (KPKVAEPVKK…NNQSSSVPAT (227 aa)) are disordered. 2 stretches are compositionally biased toward polar residues: residues 322–336 (NRNQ…NWNQ) and 343–353 (YQNNQSSSVPA). The tr-type G domain maps to 448–619 (ERPAVVTIMG…LLVAEVQELK (172 aa)). A G1 region spans residues 457 to 464 (GHVDHGKT). 457–464 (GHVDHGKT) contacts GTP. Residues 482 to 486 (GITQH) are G2. The tract at residues 503–506 (DTPG) is G3. Residues 503 to 507 (DTPGH) and 557 to 560 (NKID) contribute to the GTP site. The segment at 557–560 (NKID) is G4. The G5 stretch occupies residues 595 to 597 (SAK).

It belongs to the TRAFAC class translation factor GTPase superfamily. Classic translation factor GTPase family. IF-2 subfamily.

It is found in the cytoplasm. Functionally, one of the essential components for the initiation of protein synthesis. Protects formylmethionyl-tRNA from spontaneous hydrolysis and promotes its binding to the 30S ribosomal subunits. Also involved in the hydrolysis of GTP during the formation of the 70S ribosomal complex. The sequence is that of Translation initiation factor IF-2 from Lactococcus lactis subsp. cremoris (strain MG1363).